A 114-amino-acid chain; its full sequence is Large ribosomal subunit protein bL20 (114 aa).

Belongs to the bacterial ribosomal protein bL20 family.

Binds directly to 23S ribosomal RNA and is necessary for the in vitro assembly process of the 50S ribosomal subunit. It is not involved in the protein synthesizing functions of that subunit. The polypeptide is Large ribosomal subunit protein bL20 (Flavobacterium psychrophilum (strain ATCC 49511 / DSM 21280 / CIP 103535 / JIP02/86)).